The chain runs to 461 residues: Cytochrome c biogenesis protein CcsB (461 aa).

3 consecutive transmembrane segments (helical) span residues 32-52 (LRLAIALLLIIALFSISGTVI), 91-111 (TWWFLSLLVLFGTSLTACTFT), and 178-198 (IGPIIVHIGIVTILLGSIWGA).

This sequence belongs to the Ccs1/CcsB family. As to quaternary structure, may interact with CcsA.

The protein resides in the cellular thylakoid membrane. Required during biogenesis of c-type cytochromes (cytochrome c6 and cytochrome f) at the step of heme attachment. In Trichormus variabilis (strain ATCC 29413 / PCC 7937) (Anabaena variabilis), this protein is Cytochrome c biogenesis protein CcsB.